The primary structure comprises 81 residues: Sulfur carrier protein TusA (81 aa).

C19 (cysteine persulfide intermediate) is an active-site residue.

This sequence belongs to the sulfur carrier protein TusA family. Interacts with IscS.

The protein localises to the cytoplasm. It functions in the pathway tRNA modification. Functionally, sulfur carrier protein involved in sulfur trafficking in the cell. Part of a sulfur-relay system required for 2-thiolation during synthesis of 2-thiouridine of the modified wobble base 5-methylaminomethyl-2-thiouridine (mnm(5)s(2)U) in tRNA. Interacts with IscS and stimulates its cysteine desulfurase activity. Accepts an activated sulfur from IscS, which is then transferred to TusD, and thus determines the direction of sulfur flow from IscS to 2-thiouridine formation. Also appears to be involved in sulfur transfer for the biosynthesis of molybdopterin. This chain is Sulfur carrier protein TusA, found in Escherichia coli (strain SMS-3-5 / SECEC).